The chain runs to 122 residues: Large ribosomal subunit protein uL14c (122 aa).

The protein belongs to the universal ribosomal protein uL14 family. In terms of assembly, part of the 50S ribosomal subunit.

It localises to the plastid. Its subcellular location is the chloroplast. Functionally, binds to 23S rRNA. The sequence is that of Large ribosomal subunit protein uL14c from Cycas taitungensis (Prince sago).